The primary structure comprises 171 residues: Protein BTG1 (171 aa).

Residue serine 159 is modified to Phosphoserine.

Belongs to the BTG family. In terms of assembly, interacts with CNOT7 and CNOT8.

Functionally, anti-proliferative protein. This is Protein BTG1 (Btg1) from Rattus norvegicus (Rat).